A 309-amino-acid polypeptide reads, in one-letter code: Protease HtpX homolog (309 aa).

2 consecutive transmembrane segments (helical) span residues 15 to 35 and 54 to 74; these read NAVL…VDVI and IFPT…VVCI. A Zn(2+)-binding site is contributed by His-165. Glu-166 is a catalytic residue. His-169 is a Zn(2+) binding site. 2 helical membrane passes run 181-201 and 213-233; these read VGIL…FFMG and MILL…QMYL. Glu-238 provides a ligand contact to Zn(2+).

Belongs to the peptidase M48B family. Requires Zn(2+) as cofactor.

The protein localises to the cell inner membrane. The chain is Protease HtpX homolog from Helicobacter acinonychis (strain Sheeba).